We begin with the raw amino-acid sequence, 896 residues long: Zinc finger protein 574 (896 aa).

C2H2-type zinc fingers lie at residues 16 to 38 (YVCS…QNSH) and 76 to 98 (YQCL…QELH). The residue at position 113 (serine 113) is a Phosphoserine. The C2H2-type 3 zinc-finger motif lies at 126–148 (YECVDCKALFASQELWLNHRQTH). Phosphoserine is present on serine 164. The C2H2-type 4 zinc-finger motif lies at 214–236 (YKCSECSQLFQLPADFLEHQATH). The tract at residues 239–301 (APVPESQEPA…RARRNNSGEA (63 aa)) is disordered. Positions 247–257 (PALQQEVQASS) are enriched in polar residues. The segment covering 274–287 (HSYELRNGEAIGRD) has biased composition (basic and acidic residues). Residue serine 298 is modified to Phosphoserine. 4 consecutive C2H2-type zinc fingers follow at residues 309–331 (LFCS…LRSH), 336–358 (FKCP…LGDH), 364–386 (FLCV…RRAH), and 392–413 (HSCP…RRTH). Residues 434 to 460 (FPEPAPAETGEPEAPEPPVSEETSAGP) form a disordered region. The segment at 466–489 (YRCLLCSREFGKALQLTRHQRFVH) adopts a C2H2-type 9 zinc-finger fold. The segment at 495–517 (HKCSICGKMFKKKSHVRNHLRTH) adopts a C2H2-type 10; degenerate zinc-finger fold. 4 C2H2-type zinc fingers span residues 523–545 (FPCP…RLTH), 551–573 (YRCG…RLVH), 579–601 (YRCQ…RYHH), and 607–630 (YKCR…LVVH). The segment at 636 to 659 (HRCPSCGAAFPSSLRLREHRCAAA) adopts a C2H2-type 15; degenerate zinc-finger fold. The segment at 667 to 689 (FECGTCGKKVGSAARLQAHEAAH) adopts a C2H2-type 16 zinc-finger fold. The interval 687–733 (AAHAAAGPGEVLAKEPPAPRAPRATRAPVASPAALGSTATASPAAPA) is disordered. Positions 707 to 732 (APRATRAPVASPAALGSTATASPAAP) are enriched in low complexity. Residue serine 717 is modified to Phosphoserine. Threonine 724 is modified (phosphothreonine). At serine 728 the chain carries Phosphoserine. 4 consecutive C2H2-type zinc fingers follow at residues 738-760 (LECS…RRIH), 766-788 (YPCP…RRLH), 794-816 (FACE…RRIH), and 822-844 (YSCP…RKTH). Position 832 is an asymmetric dimethylarginine (arginine 832).

Belongs to the krueppel C2H2-type zinc-finger protein family.

It is found in the nucleus. Its function is as follows. May be involved in transcriptional regulation. The polypeptide is Zinc finger protein 574 (ZNF574) (Homo sapiens (Human)).